Consider the following 517-residue polypeptide: Cytochrome P450 monooxygenase calE (517 aa).

N-linked (GlcNAc...) asparagine glycosylation occurs at N8. Residues 14 to 34 (SLMHHYILIAILVASIIAMVV) form a helical membrane-spanning segment. Residue C458 coordinates heme.

It belongs to the cytochrome P450 family. Heme is required as a cofactor.

The protein localises to the membrane. It participates in secondary metabolite biosynthesis. Its function is as follows. Cytochrome P450 monooxygenase; part of the gene cluster that mediates the biosynthesis of calbistrin A and related compounds. Calbistrin A is a secondary metabolite with an interesting structure that was recently found to have bioactivity against leukemia cells. It consists of two polyketides linked by an ester bond: a bicyclic decalin containing polyketide and a linear 12 carbon dioic acid structure. The polyketide synthase calA is probably responsible for forming the decalin moiety. Because calA lacks a designated enoylreductase (ER) domain, the required activity is provided by the trans-enoyl reductase calK. Following release from the PKS, calF then probably catalyzes the oxidation and the subsequent Diels Alder cycloisomerization that lead to the formation of the decalin moiety. The decalin polyketide backbone includes two C-methyl groups, at C7 and C11 in backbone, of which the C7 position is probably methylated by the methyltransferase domain of calA. A candidate for adding the methyl group at C11, if not done by CalA, is the cluster methyltransferase calH. Several additional tailoring enzymes within the cluster could be involved in the modification of the decalin polyketide product. Those include the 3 cytochrome P450 monooxygenases CalE, CalG and CalL, of which one might be responsible for the introduction of the extra hydroxyl group attached to the backbone of the decalin moiety, at position C9 in the backbone, that allows for attachment of the linear moiety. One tailoring enzyme activity that is expected to be involved in biosynthesis of calbistrin is an acyltransferase for connecting the two polyketide synthase products, and which could be performed by the cluster acyltransferase calJ. The enzyme responsible for the biosynthesis of the linear moiety, probably a second PKS, has not been identified yet. The chain is Cytochrome P450 monooxygenase calE from Penicillium decumbens.